A 408-amino-acid chain; its full sequence is MRSSCVLLTALVALAAYYVYIPLPGSVSDPWKLMLLDATFRGAQQVSNLIHYLGLSHHLLALNFIIVSFGKKSAWSSAQVKVTDTDFDGVEVRVFEGPPKPEEPLKRSVVYIHGGGWALASAKIRYYDELCTAMAEELNAVIVSIEYRLVPKVYFPEQIHDVVRATKYFLKPEVLQKYMVDPGRICISGDSAGGSLAAALGQQFTQDASLKNKLKLQALIYPVLQALDFNTPSYQQNVNTPILPRYVMVKYWVDYFKGNYDFVQAMIVNNHTSLDVEEAAALRARLNWTSLLPASFTKNYKPVVQTTGNARIVQELPQLLDARSAPLIADQAVLQLLPKTYILTCEHDVLRDDGIMYAKRLETAGVEVTLDHFEDGFHGCMIFTSRPTNFSVGIRTRNSYIKWLDQNL.

Residues 1–4 (MRSS) lie on the Cytoplasmic side of the membrane. A helical; Signal-anchor for type II membrane protein membrane pass occupies residues 5–25 (CVLLTALVALAAYYVYIPLPG). Residues 26–408 (SVSDPWKLML…SYIKWLDQNL (383 aa)) are Lumenal-facing. An Involved in the stabilization of the negatively charged intermediate by the formation of the oxyanion hole motif is present at residues 113 to 115 (HGG). The active site involves Ser191. 2 N-linked (GlcNAc...) asparagine glycosylation sites follow: Asn270 and Asn287. Residues Asp348 and His378 contribute to the active site. Asn389 carries N-linked (GlcNAc...) asparagine glycosylation.

It belongs to the 'GDXG' lipolytic enzyme family. Post-translationally, N-glycosylated.

The protein resides in the cell membrane. The protein localises to the microsome. The enzyme catalyses a 1-O-alkyl-2-acetyl-sn-glycerol + H2O = a 1-O-alkyl-sn-glycerol + acetate + H(+). The catalysed reaction is 1-O-hexadecyl-2-acetyl-sn-glycerol + H2O = 1-O-hexadecyl-sn-glycerol + acetate + H(+). It carries out the reaction a cholesterol ester + H2O = cholesterol + a fatty acid + H(+). It catalyses the reaction cholesteryl (9Z-octadecenoate) + H2O = cholesterol + (9Z)-octadecenoate + H(+). In terms of biological role, hydrolyzes 2-acetyl monoalkylglycerol ether (1-O-alkyl-2-acetyl-sn-glycerol), the penultimate precursor of the pathway for de novo synthesis of platelet-activating factor. May be responsible for the hydrolysis of cholesterol esters (such as cholesteryl (9Z-octadecenoate)) in macrophages. Also involved in organ detoxification by hydrolyzing exogenous organophosphorus compounds. This Pongo abelii (Sumatran orangutan) protein is Neutral cholesterol ester hydrolase 1 (NCEH1).